Consider the following 461-residue polypeptide: tRNA modification GTPase MnmE (461 aa).

Positions 23, 88, and 127 each coordinate (6S)-5-formyl-5,6,7,8-tetrahydrofolate. A TrmE-type G domain is found at 223–382 (GLSTVIVGKP…IEDALAEMVY (160 aa)). A K(+)-binding site is contributed by asparagine 233. GTP-binding positions include 233–238 (NVGKSS), 252–258 (TDVPGTT), and 277–280 (DTAG). Serine 237 lines the Mg(2+) pocket. K(+) is bound by residues threonine 252, valine 254, and threonine 257. A Mg(2+)-binding site is contributed by threonine 258. Lysine 461 contacts (6S)-5-formyl-5,6,7,8-tetrahydrofolate.

The protein belongs to the TRAFAC class TrmE-Era-EngA-EngB-Septin-like GTPase superfamily. TrmE GTPase family. In terms of assembly, homodimer. Heterotetramer of two MnmE and two MnmG subunits. K(+) serves as cofactor.

The protein localises to the cytoplasm. Functionally, exhibits a very high intrinsic GTPase hydrolysis rate. Involved in the addition of a carboxymethylaminomethyl (cmnm) group at the wobble position (U34) of certain tRNAs, forming tRNA-cmnm(5)s(2)U34. This is tRNA modification GTPase MnmE from Alkaliphilus oremlandii (strain OhILAs) (Clostridium oremlandii (strain OhILAs)).